The following is a 119-amino-acid chain: Large ribosomal subunit protein uL18 (119 aa).

The protein belongs to the universal ribosomal protein uL18 family. In terms of assembly, part of the 50S ribosomal subunit; part of the 5S rRNA/L5/L18/L25 subcomplex. Contacts the 5S and 23S rRNAs.

Its function is as follows. This is one of the proteins that bind and probably mediate the attachment of the 5S RNA into the large ribosomal subunit, where it forms part of the central protuberance. The polypeptide is Large ribosomal subunit protein uL18 (Clostridium perfringens (strain 13 / Type A)).